The following is a 152-amino-acid chain: SsrA-binding protein (152 aa).

A compositionally biased stretch (basic and acidic residues) spans 129-140 (KREDMKKKDSQR). The interval 129 to 152 (KREDMKKKDSQRELSQALKSKNRE) is disordered. Over residues 141–152 (ELSQALKSKNRE) the composition is skewed to polar residues.

Belongs to the SmpB family.

The protein localises to the cytoplasm. Its function is as follows. Required for rescue of stalled ribosomes mediated by trans-translation. Binds to transfer-messenger RNA (tmRNA), required for stable association of tmRNA with ribosomes. tmRNA and SmpB together mimic tRNA shape, replacing the anticodon stem-loop with SmpB. tmRNA is encoded by the ssrA gene; the 2 termini fold to resemble tRNA(Ala) and it encodes a 'tag peptide', a short internal open reading frame. During trans-translation Ala-aminoacylated tmRNA acts like a tRNA, entering the A-site of stalled ribosomes, displacing the stalled mRNA. The ribosome then switches to translate the ORF on the tmRNA; the nascent peptide is terminated with the 'tag peptide' encoded by the tmRNA and targeted for degradation. The ribosome is freed to recommence translation, which seems to be the essential function of trans-translation. This Pelobacter propionicus (strain DSM 2379 / NBRC 103807 / OttBd1) protein is SsrA-binding protein.